Reading from the N-terminus, the 559-residue chain is Potassium-transporting ATPase potassium-binding subunit (559 aa).

Transmembrane regions (helical) follow at residues Gly5 to Ser25, Leu27 to Trp47, Leu63 to Trp83, Gly132 to Ile152, Leu170 to Ile190, Leu253 to Ala273, Leu283 to Val303, Phe327 to Val347, Ala356 to Val376, Gly379 to Gly399, Met416 to Met436, Leu484 to Ala504, and Gly524 to Ile544.

It belongs to the KdpA family. In terms of assembly, the system is composed of three essential subunits: KdpA, KdpB and KdpC.

Its subcellular location is the cell inner membrane. Its function is as follows. Part of the high-affinity ATP-driven potassium transport (or Kdp) system, which catalyzes the hydrolysis of ATP coupled with the electrogenic transport of potassium into the cytoplasm. This subunit binds the periplasmic potassium ions and delivers the ions to the membrane domain of KdpB through an intramembrane tunnel. This is Potassium-transporting ATPase potassium-binding subunit from Salmonella dublin (strain CT_02021853).